Consider the following 602-residue polypeptide: Exopolysaccharide phosphotransferase SCO2594 (602 aa).

The disordered stretch occupies residues 251–271 (PRAGEDLDAGDGAAGGPRPGL).

This sequence belongs to the stealth family.

The chain is Exopolysaccharide phosphotransferase SCO2594 from Streptomyces coelicolor (strain ATCC BAA-471 / A3(2) / M145).